The sequence spans 402 residues: Propionate kinase (402 aa).

The ATP site is built by asparagine 11 and lysine 18. Position 11 (asparagine 11) interacts with Mg(2+). A substrate-binding site is contributed by arginine 86. Residue aspartate 143 is the Proton donor/acceptor of the active site. ATP is bound by residues histidine 175, 203–207 (HLGNG), 278–280 (DLR), and 326–330 (GIGEN).

Belongs to the acetokinase family. TdcD subfamily. Homodimer. Mg(2+) serves as cofactor.

It catalyses the reaction propanoate + ATP = propanoyl phosphate + ADP. It functions in the pathway amino-acid degradation; L-threonine degradation via propanoate pathway; propanoate from L-threonine: step 4/4. In terms of biological role, catalyzes the conversion of propionyl phosphate and ADP to propionate and ATP. The protein is Propionate kinase of Escherichia coli O157:H7.